Here is a 276-residue protein sequence, read N- to C-terminus: Bifunctional protein FolD (276 aa).

NADP(+) contacts are provided by residues 158-160 (NRS), S183, and I224.

This sequence belongs to the tetrahydrofolate dehydrogenase/cyclohydrolase family. In terms of assembly, homodimer.

It catalyses the reaction (6R)-5,10-methylene-5,6,7,8-tetrahydrofolate + NADP(+) = (6R)-5,10-methenyltetrahydrofolate + NADPH. It carries out the reaction (6R)-5,10-methenyltetrahydrofolate + H2O = (6R)-10-formyltetrahydrofolate + H(+). It participates in one-carbon metabolism; tetrahydrofolate interconversion. In terms of biological role, catalyzes the oxidation of 5,10-methylenetetrahydrofolate to 5,10-methenyltetrahydrofolate and then the hydrolysis of 5,10-methenyltetrahydrofolate to 10-formyltetrahydrofolate. In Picrophilus torridus (strain ATCC 700027 / DSM 9790 / JCM 10055 / NBRC 100828 / KAW 2/3), this protein is Bifunctional protein FolD.